Reading from the N-terminus, the 164-residue chain is S-ribosylhomocysteine lyase (164 aa).

Positions 61, 65, and 131 each coordinate Fe cation.

It belongs to the LuxS family. Homodimer. The cofactor is Fe cation.

The catalysed reaction is S-(5-deoxy-D-ribos-5-yl)-L-homocysteine = (S)-4,5-dihydroxypentane-2,3-dione + L-homocysteine. Involved in the synthesis of autoinducer 2 (AI-2) which is secreted by bacteria and is used to communicate both the cell density and the metabolic potential of the environment. The regulation of gene expression in response to changes in cell density is called quorum sensing. Catalyzes the transformation of S-ribosylhomocysteine (RHC) to homocysteine (HC) and 4,5-dihydroxy-2,3-pentadione (DPD). The chain is S-ribosylhomocysteine lyase from Bifidobacterium longum (strain DJO10A).